The primary structure comprises 214 residues: Adenylate kinase (214 aa).

Residue G10–T15 participates in ATP binding. Residues S30–V59 form an NMP region. Residues T31, R36, Q57–V59, G85–R88, and Q92 each bind AMP. The segment at G122–D159 is LID. Residues R123 and T132 to Y133 each bind ATP. The AMP site is built by R156 and R167. K200 serves as a coordination point for ATP.

Belongs to the adenylate kinase family. Monomer.

The protein localises to the cytoplasm. The catalysed reaction is AMP + ATP = 2 ADP. Its pathway is purine metabolism; AMP biosynthesis via salvage pathway; AMP from ADP: step 1/1. Catalyzes the reversible transfer of the terminal phosphate group between ATP and AMP. Plays an important role in cellular energy homeostasis and in adenine nucleotide metabolism. The polypeptide is Adenylate kinase (Vibrio parahaemolyticus serotype O3:K6 (strain RIMD 2210633)).